Reading from the N-terminus, the 90-residue chain is Probable Fe(2+)-trafficking protein (90 aa).

Belongs to the Fe(2+)-trafficking protein family.

Functionally, could be a mediator in iron transactions between iron acquisition and iron-requiring processes, such as synthesis and/or repair of Fe-S clusters in biosynthetic enzymes. This Paracidovorax citrulli (strain AAC00-1) (Acidovorax citrulli) protein is Probable Fe(2+)-trafficking protein.